Here is a 245-residue protein sequence, read N- to C-terminus: 1-(5-phosphoribosyl)-5-[(5-phosphoribosylamino)methylideneamino] imidazole-4-carboxamide isomerase (245 aa).

The active-site Proton acceptor is aspartate 7. Aspartate 129 acts as the Proton donor in catalysis.

It belongs to the HisA/HisF family.

It is found in the cytoplasm. The enzyme catalyses 1-(5-phospho-beta-D-ribosyl)-5-[(5-phospho-beta-D-ribosylamino)methylideneamino]imidazole-4-carboxamide = 5-[(5-phospho-1-deoxy-D-ribulos-1-ylimino)methylamino]-1-(5-phospho-beta-D-ribosyl)imidazole-4-carboxamide. It participates in amino-acid biosynthesis; L-histidine biosynthesis; L-histidine from 5-phospho-alpha-D-ribose 1-diphosphate: step 4/9. The polypeptide is 1-(5-phosphoribosyl)-5-[(5-phosphoribosylamino)methylideneamino] imidazole-4-carboxamide isomerase (Pectobacterium carotovorum subsp. carotovorum (strain PC1)).